We begin with the raw amino-acid sequence, 263 residues long: Nitrogenase iron protein 2 (263 aa).

9–16 lines the ATP pocket; that stretch reads GKGGIGKS. A [4Fe-4S] cluster-binding site is contributed by Cys92. An ADP-ribosylarginine; by dinitrogenase reductase ADP-ribosyltransferase modification is found at Arg95. Cys127 contacts [4Fe-4S] cluster.

The protein belongs to the NifH/BchL/ChlL family. Homodimer. The cofactor is [4Fe-4S] cluster. Post-translationally, the reversible ADP-ribosylation of Arg-95 inactivates the nitrogenase reductase and regulates nitrogenase activity.

The enzyme catalyses N2 + 8 reduced [2Fe-2S]-[ferredoxin] + 16 ATP + 16 H2O = H2 + 8 oxidized [2Fe-2S]-[ferredoxin] + 2 NH4(+) + 16 ADP + 16 phosphate + 6 H(+). Functionally, the key enzymatic reactions in nitrogen fixation are catalyzed by the nitrogenase complex, which has 2 components: the iron protein and the molybdenum-iron protein. This chain is Nitrogenase iron protein 2 (nifH2), found in Methanobacterium ivanovii.